Reading from the N-terminus, the 436-residue chain is UPF0597 protein YhaM (436 aa).

The protein belongs to the UPF0597 family.

The polypeptide is UPF0597 protein YhaM (Escherichia coli O139:H28 (strain E24377A / ETEC)).